We begin with the raw amino-acid sequence, 432 residues long: D-amino acid dehydrogenase (432 aa).

FAD is bound at residue 3–17; that stretch reads VVILGSGVVGVASAW.

The protein belongs to the DadA oxidoreductase family. FAD serves as cofactor.

It catalyses the reaction a D-alpha-amino acid + A + H2O = a 2-oxocarboxylate + AH2 + NH4(+). It participates in amino-acid degradation; D-alanine degradation; NH(3) and pyruvate from D-alanine: step 1/1. In terms of biological role, oxidative deamination of D-amino acids. This Shigella dysenteriae serotype 1 (strain Sd197) protein is D-amino acid dehydrogenase.